A 146-amino-acid chain; its full sequence is Putative pre-16S rRNA nuclease (146 aa).

This sequence belongs to the YqgF nuclease family.

It is found in the cytoplasm. Its function is as follows. Could be a nuclease involved in processing of the 5'-end of pre-16S rRNA. This Burkholderia mallei (strain SAVP1) protein is Putative pre-16S rRNA nuclease.